We begin with the raw amino-acid sequence, 295 residues long: UDP-3-O-acyl-N-acetylglucosamine deacetylase (295 aa).

Zn(2+) is bound by residues H77, H233, and D237. H260 serves as the catalytic Proton donor.

It belongs to the LpxC family. Requires Zn(2+) as cofactor.

The catalysed reaction is a UDP-3-O-[(3R)-3-hydroxyacyl]-N-acetyl-alpha-D-glucosamine + H2O = a UDP-3-O-[(3R)-3-hydroxyacyl]-alpha-D-glucosamine + acetate. Its pathway is glycolipid biosynthesis; lipid IV(A) biosynthesis; lipid IV(A) from (3R)-3-hydroxytetradecanoyl-[acyl-carrier-protein] and UDP-N-acetyl-alpha-D-glucosamine: step 2/6. In terms of biological role, catalyzes the hydrolysis of UDP-3-O-myristoyl-N-acetylglucosamine to form UDP-3-O-myristoylglucosamine and acetate, the committed step in lipid A biosynthesis. The protein is UDP-3-O-acyl-N-acetylglucosamine deacetylase of Solibacter usitatus (strain Ellin6076).